Reading from the N-terminus, the 619-residue chain is Guanylate cyclase soluble subunit beta-1 (619 aa).

A heme-binding site is contributed by histidine 105. Residues 421 to 554 (TILFSGIVGF…NTVNLTSRTE (134 aa)) form the Guanylate cyclase domain.

It belongs to the adenylyl cyclase class-4/guanylyl cyclase family. As to quaternary structure, the active enzyme is formed by a heterodimer of an alpha and a beta subunit. Homotetramer; dimer of dimers (in vitro). Heterodimer with GUCY1A1. Can also form inactive homodimers in vitro. Heme serves as cofactor. As to expression, lung and brain.

It is found in the cytoplasm. The enzyme catalyses GTP = 3',5'-cyclic GMP + diphosphate. Activated by nitric oxide in the presence of magnesium or manganese ions. In terms of biological role, mediates responses to nitric oxide (NO) by catalyzing the biosynthesis of the signaling molecule cGMP. In Rattus norvegicus (Rat), this protein is Guanylate cyclase soluble subunit beta-1 (Gucy1b1).